A 248-amino-acid polypeptide reads, in one-letter code: PF03932 family protein CutC (248 aa).

It belongs to the CutC family. Homodimer.

Its subcellular location is the cytoplasm. This chain is PF03932 family protein CutC, found in Salmonella paratyphi A (strain AKU_12601).